A 549-amino-acid polypeptide reads, in one-letter code: MKNINPTHTQAWKSLEAHKAELSNTTIQDLFKQEKNRFDDYSLTFNNQILVDFSKNNINQTTLSHLRQLAQECALDSAKEAMFTGEKINRTENRAVLHTALRNRTNTPVLVDGKDVMPEVNAVLAKMKDFCQRIISGEWKGYTGKAITDVVNIGIGGSDLGPYMVTEALRPYKNHLNMHFVSNVDGTHIAETLKKVNPETTLFLVASKTFTTQETMTNAQSARDWLLKAAKDESAVAKHFAALSTNAKDVEKFGIDTNNMFEFWDWVGGRYSLWSAIGLSIALSIGFENFEALLNGAHEMDKHFRTTPIEKNIPTTLALVGLWNTNFLGAQTEAILPYDQYLHRFAAYFQQGNMESNGKYVDRDGNVINNYQTGPIIWGEPGTNGQHAFYQLIHQGTTLIPCDFIAPAQSHNPLADHHNKLLSNFFAQTEALAFGKTKEEVEAEFVKAGKSLDDVKNIVPFKVFTGNKPTNSILVQKITPFTLGALIAMYEHKIFVQGVIFNIFSFDQWGVELGKQLANRILPELTDSEKVASHDSSTNGLINQFKAWR.

The active-site Proton donor is the E355. Catalysis depends on residues H387 and K515.

The protein belongs to the GPI family.

The protein localises to the cytoplasm. The catalysed reaction is alpha-D-glucose 6-phosphate = beta-D-fructose 6-phosphate. It participates in carbohydrate biosynthesis; gluconeogenesis. Its pathway is carbohydrate degradation; glycolysis; D-glyceraldehyde 3-phosphate and glycerone phosphate from D-glucose: step 2/4. In terms of biological role, catalyzes the reversible isomerization of glucose-6-phosphate to fructose-6-phosphate. This chain is Glucose-6-phosphate isomerase, found in Haemophilus influenzae (strain 86-028NP).